A 247-amino-acid chain; its full sequence is DNA polymerase sliding clamp (247 aa).

This sequence belongs to the PCNA family. As to quaternary structure, homotrimer. The subunits circularize to form a toroid; DNA passes through its center. Replication factor C (RFC) is required to load the toroid on the DNA.

Sliding clamp subunit that acts as a moving platform for DNA processing. Responsible for tethering the catalytic subunit of DNA polymerase and other proteins to DNA during high-speed replication. The polypeptide is DNA polymerase sliding clamp (Halobacterium salinarum (strain ATCC 29341 / DSM 671 / R1)).